The primary structure comprises 535 residues: CTP synthase (535 aa).

The tract at residues 1 to 267 (MTKYIFVTGG…DQIVCDHLKL (267 aa)) is amidoligase domain. S13 provides a ligand contact to CTP. S13 lines the UTP pocket. Position 14 to 19 (14 to 19 (SLGKGI)) interacts with ATP. Y54 contacts L-glutamine. D71 serves as a coordination point for ATP. 2 residues coordinate Mg(2+): D71 and E141. CTP contacts are provided by residues 148-150 (DIE), 188-193 (KTKPTQ), and K224. UTP contacts are provided by residues 188 to 193 (KTKPTQ) and K224. ATP is bound at residue 240 to 242 (RDA). Positions 292 to 534 (KIALVGKYVE…VKASITNKES (243 aa)) constitute a Glutamine amidotransferase type-1 domain. L-glutamine is bound at residue G354. The active-site Nucleophile; for glutamine hydrolysis is the C381. Residues 382 to 385 (LGMQ), E405, and R462 contribute to the L-glutamine site. Active-site residues include H507 and E509.

Belongs to the CTP synthase family. As to quaternary structure, homotetramer.

The catalysed reaction is UTP + L-glutamine + ATP + H2O = CTP + L-glutamate + ADP + phosphate + 2 H(+). The enzyme catalyses L-glutamine + H2O = L-glutamate + NH4(+). It catalyses the reaction UTP + NH4(+) + ATP = CTP + ADP + phosphate + 2 H(+). It functions in the pathway pyrimidine metabolism; CTP biosynthesis via de novo pathway; CTP from UDP: step 2/2. With respect to regulation, allosterically activated by GTP, when glutamine is the substrate; GTP has no effect on the reaction when ammonia is the substrate. The allosteric effector GTP functions by stabilizing the protein conformation that binds the tetrahedral intermediate(s) formed during glutamine hydrolysis. Inhibited by the product CTP, via allosteric rather than competitive inhibition. In terms of biological role, catalyzes the ATP-dependent amination of UTP to CTP with either L-glutamine or ammonia as the source of nitrogen. Regulates intracellular CTP levels through interactions with the four ribonucleotide triphosphates. The protein is CTP synthase of Bacillus thuringiensis subsp. konkukian (strain 97-27).